The primary structure comprises 151 residues: UPF0208 membrane protein CKO_00500 (151 aa).

The next 2 membrane-spanning stretches (helical) occupy residues 46 to 65 (YAIR…QIAL) and 69 to 91 (LGPA…WWLG).

Belongs to the UPF0208 family.

Its subcellular location is the cell inner membrane. The chain is UPF0208 membrane protein CKO_00500 from Citrobacter koseri (strain ATCC BAA-895 / CDC 4225-83 / SGSC4696).